We begin with the raw amino-acid sequence, 293 residues long: Ribosomal protein L11 methyltransferase (293 aa).

4 residues coordinate S-adenosyl-L-methionine: Thr145, Gly166, Asp188, and Asn230.

The protein belongs to the methyltransferase superfamily. PrmA family.

It is found in the cytoplasm. It catalyses the reaction L-lysyl-[protein] + 3 S-adenosyl-L-methionine = N(6),N(6),N(6)-trimethyl-L-lysyl-[protein] + 3 S-adenosyl-L-homocysteine + 3 H(+). Methylates ribosomal protein L11. The chain is Ribosomal protein L11 methyltransferase from Salmonella heidelberg (strain SL476).